The sequence spans 328 residues: Phosphatidylglycerol--prolipoprotein diacylglyceryl transferase (328 aa).

3 helical membrane-spanning segments follow: residues 15 to 35 (VIQGIPITWYSLSYILIILIS), 57 to 77 (IFMFSLVLGAILGGRLASTLV), and 106 to 126 (GMAIHGGFLGAIIAPLITINT). Residue R156 participates in a 1,2-diacyl-sn-glycero-3-phospho-(1'-sn-glycerol) binding. 2 helical membrane-spanning segments follow: residues 242–262 (GFIFGVYVMLYAFFRFFIEYL) and 289–309 (ISMGQILSLTLMLSGLIWIIV).

This sequence belongs to the Lgt family.

Its subcellular location is the cell inner membrane. The enzyme catalyses L-cysteinyl-[prolipoprotein] + a 1,2-diacyl-sn-glycero-3-phospho-(1'-sn-glycerol) = an S-1,2-diacyl-sn-glyceryl-L-cysteinyl-[prolipoprotein] + sn-glycerol 1-phosphate + H(+). It functions in the pathway protein modification; lipoprotein biosynthesis (diacylglyceryl transfer). In terms of biological role, catalyzes the transfer of the diacylglyceryl group from phosphatidylglycerol to the sulfhydryl group of the N-terminal cysteine of a prolipoprotein, the first step in the formation of mature lipoproteins. In Borreliella burgdorferi (strain ZS7) (Borrelia burgdorferi), this protein is Phosphatidylglycerol--prolipoprotein diacylglyceryl transferase.